A 182-amino-acid chain; its full sequence is Large ribosomal subunit protein uL6 (182 aa).

The protein belongs to the universal ribosomal protein uL6 family. As to quaternary structure, part of the 50S ribosomal subunit.

Functionally, this protein binds to the 23S rRNA, and is important in its secondary structure. It is located near the subunit interface in the base of the L7/L12 stalk, and near the tRNA binding site of the peptidyltransferase center. This is Large ribosomal subunit protein uL6 from Pelotomaculum thermopropionicum (strain DSM 13744 / JCM 10971 / SI).